Here is a 311-residue protein sequence, read N- to C-terminus: DNA replication terminus site-binding protein (311 aa).

It belongs to the Tus family.

It is found in the cytoplasm. In terms of biological role, trans-acting protein required for termination of DNA replication. Binds to DNA replication terminator sequences (terA to terF) to prevent the passage of replication forks. The termination efficiency will be affected by the affinity of this protein for the terminator sequence. In Yersinia pseudotuberculosis serotype O:1b (strain IP 31758), this protein is DNA replication terminus site-binding protein.